The chain runs to 458 residues: MAVLNPMTLGIYLQLFFCSIVSQPTFINSVLPISAALPGLDQKKRGNHKACCLLMPPPPPLFPPPFFRGSRSPLLSPDMKNLLELEASPSPCMQGSLGSPGPPGPQGPPGLPGKAGPKGEKGDLGRPGRKGRPGPPGVPGEPGPVGWPGPEGPRGEKGDVGMMGLPGSRGPMGSKGFPGSRGEKGSRGERGDLGPKGEKGFPGFPGMLGQKGEMGPKGESGIAGHRGPTGRPGKRGKQGQKGDSGIMGPPGKPGPSGQPGRQGPPGPPGPPSAGQLVMGLKGERGFPGPPGRCLCGPPANVNNPSYGDPMYGRGSPRVPAIFVVNNQEELEKLNTQNAIAFRRDQRSLYFKDSLGWLPIQLTPFYPVGLHHKAAWHLCGDGVLQPGEECDDGNPDVSDGCIDCHRAYCGDGYRHRGVEDCDGSDFGYLKCETYLPGSYGELRCTQYCSIDSTPCRYFT.

A signal peptide spans 1 to 22 (MAVLNPMTLGIYLQLFFCSIVS). The tract at residues 51-67 (CCLLMPPPPPLFPPPFF) is PRAD. Residues 89–291 (PSPCMQGSLG…GERGFPGPPG (203 aa)) form a disordered region. 2 Collagen-like domains span residues 95–271 (GSLG…PGPP) and 279–293 (GLKGERGFPGPPGRC). Residues 100–111 (PGPPGPQGPPGL) are compositionally biased toward pro residues. The segment covering 117–126 (PKGEKGDLGR) has biased composition (basic and acidic residues). The tract at residues 129–132 (RKGR) is heparan sulfate proteoglycan binding. A compositionally biased stretch (pro residues) spans 133-151 (PGPPGVPGEPGPVGWPGPE). A compositionally biased stretch (basic and acidic residues) spans 181–199 (RGEKGSRGERGDLGPKGEK). Residues 234–237 (KRGK) form a heparan sulfate proteoglycan binding region. Over residues 262–271 (QGPPGPPGPP) the composition is skewed to pro residues.

Belongs to the COLQ family. As to quaternary structure, homotrimer. Component of the asymmetric form of AChE, a disulfide-bonded oligomer composed of the collagenic subunits (Q) and a variable number of asymmetric catalytic subunits (T). The N-terminal of a collagenic subunit (Q) associates with the C-terminal of a catalytic subunit (T). The triple-helical tail is stabilized by disulfide bonds at each end. In terms of tissue distribution, expressed in skeletal muscle, heart, brain, as well as in lung, spleen, testis, but not liver. The short isoform represents about 5% of the transcripts in the soleus muscle and about 15% in the heart ventricle.

Its subcellular location is the synapse. Its function is as follows. Anchors the catalytic subunits of asymmetric AChE to the synaptic basal lamina. In Rattus norvegicus (Rat), this protein is Acetylcholinesterase collagenic tail peptide (Colq).